Consider the following 299-residue polypeptide: GTPase Era (299 aa).

The 171-residue stretch at 5 to 175 (RSGFVCFVGR…TDVLAGKLPP (171 aa)) folds into the Era-type G domain. The G1 stretch occupies residues 13 to 20 (GRPNTGKS). 13–20 (GRPNTGKS) is a GTP binding site. The tract at residues 39 to 43 (QTTRH) is G2. The tract at residues 60–63 (DTPG) is G3. Residues 60–64 (DTPGL) and 124–127 (TKID) contribute to the GTP site. The tract at residues 124-127 (TKID) is G4. A G5 region spans residues 154–156 (VSA). In terms of domain architecture, KH type-2 spans 206–285 (VRDELPHSLA…YLDLRVKIAK (80 aa)).

It belongs to the TRAFAC class TrmE-Era-EngA-EngB-Septin-like GTPase superfamily. Era GTPase family. As to quaternary structure, monomer.

It is found in the cell envelope. It localises to the secreted. The protein localises to the cell wall. In terms of biological role, exhibits GTPase activity. Binds RNA but is probably not involved in ribosome assembly in mycobacteria. This is GTPase Era from Mycobacterium sp. (strain KMS).